A 212-amino-acid chain; its full sequence is Thymidylate kinase (212 aa).

Position 10–17 (10–17 (GGEGSGKT)) interacts with ATP.

This sequence belongs to the thymidylate kinase family.

It catalyses the reaction dTMP + ATP = dTDP + ADP. Functionally, phosphorylation of dTMP to form dTDP in both de novo and salvage pathways of dTTP synthesis. This chain is Thymidylate kinase, found in Marinomonas sp. (strain MWYL1).